We begin with the raw amino-acid sequence, 1054 residues long: Carbamoyl phosphate synthase large chain (1054 aa).

Residues 1–402 (MPRRDDIRSI…SLLKAMASLE (402 aa)) are carboxyphosphate synthetic domain. The ATP site is built by R129, R169, G175, G176, R208, V210, E215, G241, V242, H243, Q285, and E299. One can recognise an ATP-grasp 1 domain in the interval 133 to 328 (REAMERIGLR…IAKIAARLAV (196 aa)). Q285, E299, and N301 together coordinate Mg(2+). Mn(2+) is bound by residues Q285, E299, and N301. An oligomerization domain region spans residues 403–531 (IETRDIQARL…YYYSTYEQED (129 aa)). The tract at residues 532 to 914 (EVERGENPSV…AFAKALAAAG (383 aa)) is carbamoyl phosphate synthetic domain. Positions 658–849 (GRLLRELGIP…LARLATRVLL (192 aa)) constitute an ATP-grasp 2 domain. ATP is bound by residues R694, K733, E740, G765, V766, H767, S768, Q808, and E820. Positions 808, 820, and 822 each coordinate Mg(2+). Mn(2+)-binding residues include Q808, E820, and N822. Positions 915 to 1054 (QRLPESGRVY…SLQDLYAART (140 aa)) constitute an MGS-like domain. The interval 915-1054 (QRLPESGRVY…SLQDLYAART (140 aa)) is allosteric domain.

Belongs to the CarB family. Composed of two chains; the small (or glutamine) chain promotes the hydrolysis of glutamine to ammonia, which is used by the large (or ammonia) chain to synthesize carbamoyl phosphate. Tetramer of heterodimers (alpha,beta)4. Mg(2+) serves as cofactor. It depends on Mn(2+) as a cofactor.

The enzyme catalyses hydrogencarbonate + L-glutamine + 2 ATP + H2O = carbamoyl phosphate + L-glutamate + 2 ADP + phosphate + 2 H(+). The catalysed reaction is hydrogencarbonate + NH4(+) + 2 ATP = carbamoyl phosphate + 2 ADP + phosphate + 2 H(+). It functions in the pathway amino-acid biosynthesis; L-arginine biosynthesis; carbamoyl phosphate from bicarbonate: step 1/1. It participates in pyrimidine metabolism; UMP biosynthesis via de novo pathway; (S)-dihydroorotate from bicarbonate: step 1/3. In terms of biological role, large subunit of the glutamine-dependent carbamoyl phosphate synthetase (CPSase). CPSase catalyzes the formation of carbamoyl phosphate from the ammonia moiety of glutamine, carbonate, and phosphate donated by ATP, constituting the first step of 2 biosynthetic pathways, one leading to arginine and/or urea and the other to pyrimidine nucleotides. The large subunit (synthetase) binds the substrates ammonia (free or transferred from glutamine from the small subunit), hydrogencarbonate and ATP and carries out an ATP-coupled ligase reaction, activating hydrogencarbonate by forming carboxy phosphate which reacts with ammonia to form carbamoyl phosphate. This Rubrobacter xylanophilus (strain DSM 9941 / JCM 11954 / NBRC 16129 / PRD-1) protein is Carbamoyl phosphate synthase large chain.